Consider the following 201-residue polypeptide: ATP-dependent Clp protease proteolytic subunit 2 (201 aa).

The Nucleophile role is filled by serine 98. Residue histidine 123 is part of the active site.

It belongs to the peptidase S14 family. As to quaternary structure, fourteen ClpP subunits assemble into 2 heptameric rings which stack back to back to give a disk-like structure with a central cavity, resembling the structure of eukaryotic proteasomes.

The protein localises to the cytoplasm. The enzyme catalyses Hydrolysis of proteins to small peptides in the presence of ATP and magnesium. alpha-casein is the usual test substrate. In the absence of ATP, only oligopeptides shorter than five residues are hydrolyzed (such as succinyl-Leu-Tyr-|-NHMec, and Leu-Tyr-Leu-|-Tyr-Trp, in which cleavage of the -Tyr-|-Leu- and -Tyr-|-Trp bonds also occurs).. In terms of biological role, cleaves peptides in various proteins in a process that requires ATP hydrolysis. Has a chymotrypsin-like activity. Plays a major role in the degradation of misfolded proteins. The polypeptide is ATP-dependent Clp protease proteolytic subunit 2 (Rhizobium johnstonii (strain DSM 114642 / LMG 32736 / 3841) (Rhizobium leguminosarum bv. viciae)).